The chain runs to 209 residues: Putative 3-methyladenine DNA glycosylase (209 aa).

The interval 189–209 (HVSTTRLGAPKKKRQKRLERR) is disordered. Positions 197-209 (APKKKRQKRLERR) are enriched in basic residues.

The protein belongs to the DNA glycosylase MPG family.

This Chlorobaculum parvum (strain DSM 263 / NCIMB 8327) (Chlorobium vibrioforme subsp. thiosulfatophilum) protein is Putative 3-methyladenine DNA glycosylase.